We begin with the raw amino-acid sequence, 1231 residues long: Chromosome-associated kinesin KIF4 (1231 aa).

The region spanning 9–337 (PVRVALRCRP…LRYADRARKI (329 aa)) is the Kinesin motor domain. 88 to 95 (GQTGSGKT) provides a ligand contact to ATP. Residues 351 to 1000 (ELNHLKQQVQ…IKQKLTLLQV (650 aa)) adopt a coiled-coil conformation. The residue at position 395 (Ser395) is a Phosphoserine. Position 800 is a phosphothreonine (Thr800). A phosphoserine mark is found at Ser802, Ser811, and Ser816. A globular region spans residues 1001 to 1231 (ASKQKPHLTR…GCSPIQEESH (231 aa)). Residues 1189 to 1212 (HPELKSIASESQENKAIGKKKKRA) are disordered. Phosphoserine is present on residues Ser1224 and Ser1230.

It belongs to the TRAFAC class myosin-kinesin ATPase superfamily. Kinesin family. Chromokinesin subfamily. [2Fe-2S] cluster serves as cofactor. Requires [4Fe-4S] cluster as cofactor. Expressed in pyramidal cells in juvenile hippocampus, granular cells in juvenile cerebellar cortex and in adult spleen.

The protein resides in the nucleus. It is found in the chromosome. It localises to the cytoplasm. The protein localises to the cytoskeleton. Iron-sulfur (Fe-S) cluster binding motor protein that has a role in chromosome segregation during mitosis. Required for mitotic chromosomal positioning and bipolar spindle stabilization. The sequence is that of Chromosome-associated kinesin KIF4 (Kif4) from Mus musculus (Mouse).